The following is a 190-amino-acid chain: ATP synthase subunit b (190 aa).

Residues 24–44 form a helical membrane-spanning segment; it reads IVGSLICFVVILFFFWKLVLP.

It belongs to the ATPase B chain family. As to quaternary structure, F-type ATPases have 2 components, F(1) - the catalytic core - and F(0) - the membrane proton channel. F(1) has five subunits: alpha(3), beta(3), gamma(1), delta(1), epsilon(1). F(0) has three main subunits: a(1), b(2) and c(10-14). The alpha and beta chains form an alternating ring which encloses part of the gamma chain. F(1) is attached to F(0) by a central stalk formed by the gamma and epsilon chains, while a peripheral stalk is formed by the delta and b chains.

It localises to the cell membrane. F(1)F(0) ATP synthase produces ATP from ADP in the presence of a proton or sodium gradient. F-type ATPases consist of two structural domains, F(1) containing the extramembraneous catalytic core and F(0) containing the membrane proton channel, linked together by a central stalk and a peripheral stalk. During catalysis, ATP synthesis in the catalytic domain of F(1) is coupled via a rotary mechanism of the central stalk subunits to proton translocation. Functionally, component of the F(0) channel, it forms part of the peripheral stalk, linking F(1) to F(0). The protein is ATP synthase subunit b of Leifsonia xyli subsp. xyli (strain CTCB07).